The primary structure comprises 130 residues: Small ribosomal subunit protein uS8 (130 aa).

Belongs to the universal ribosomal protein uS8 family. Part of the 30S ribosomal subunit. Contacts proteins S5 and S12.

Its function is as follows. One of the primary rRNA binding proteins, it binds directly to 16S rRNA central domain where it helps coordinate assembly of the platform of the 30S subunit. The sequence is that of Small ribosomal subunit protein uS8 from Marinobacter nauticus (strain ATCC 700491 / DSM 11845 / VT8) (Marinobacter aquaeolei).